A 59-amino-acid polypeptide reads, in one-letter code: Potassium channel toxin alpha-KTx 16.4 (59 aa).

Positions 1 to 22 (MKILSIVLIALIICSISICTEA) are cleaved as a signal peptide. Cystine bridges form between C30-C51, C36-C56, and C40-C58.

Belongs to the short scorpion toxin superfamily. Potassium channel inhibitor family. Alpha-KTx 16 subfamily. As to expression, expressed by the venom gland.

It is found in the secreted. Weak inhibitor of voltage-gated potassium channel hKv1.3/KCNA3. This Mesobuthus eupeus (Lesser Asian scorpion) protein is Potassium channel toxin alpha-KTx 16.4.